Consider the following 393-residue polypeptide: Cytochrome b (393 aa).

At 1–33 the chain is on the mitochondrial matrix side; that stretch reads MTIRNQRFSLLKQPISSTLNQHLVDYPTPSNLS. A helical membrane pass occupies residues 34 to 57; it reads YWWGFGSLAGICLVIQIVTGVFLA. The Mitochondrial intermembrane portion of the chain corresponds to 58–80; it reads MHYTPHVDLAFNSVEHIMRDVEG. Residues 81 to 108 form a helical membrane-spanning segment; it reads GWLLRYMHANGASMFFIVVYLHIFRGLY. Residues histidine 88 and histidine 102 each coordinate heme b. At 109-116 the chain is on the mitochondrial matrix side; it reads YASYSSPR. Residues 117 to 141 form a helical membrane-spanning segment; it reads EFVWCLGVVIFLLMIVTAFIGYVLP. The Mitochondrial intermembrane segment spans residues 142-178; the sequence is WGQMSFWGATVITSLASAIPVVGDTIVTWLWGGFSVD. A helical transmembrane segment spans residues 179–210; the sequence is NATLNRFFSLHYLLPFILVGASLLHLAALHQY. Histidine 189 and histidine 203 together coordinate heme b. Histidine 208 lines the a ubiquinone pocket. Topologically, residues 211–229 are mitochondrial matrix; that stretch reads GSNNPLGVHSEMDKIAFYP. A helical transmembrane segment spans residues 230–252; it reads YFYVKDLVGWVAFAIFFSIWIFY. The Mitochondrial intermembrane portion of the chain corresponds to 253–293; sequence APNVLGHPDNYIPANPMSTPPHIVPEWYFLPIYAILRSIPD. Residues 294 to 314 traverse the membrane as a helical segment; that stretch reads KAGGVAAIALVFICLLALPFF. Residues 315-325 lie on the Mitochondrial matrix side of the membrane; it reads KSMYVRSSSFR. Residues 326 to 346 form a helical membrane-spanning segment; the sequence is PIYQGMFWLLLADCLLLGWIG. At 347–353 the chain is on the mitochondrial intermembrane side; sequence CQPVEAP. Residues 354-370 form a helical membrane-spanning segment; it reads FVTIGQISSLVFFLFFA. Residues 371-393 lie on the Mitochondrial matrix side of the membrane; that stretch reads ITPILGRVGRGIPNSYTDETDHT.

The protein belongs to the cytochrome b family. As to quaternary structure, component of the ubiquinol-cytochrome c oxidoreductase (cytochrome b-c1 complex, complex III, CIII), a multisubunit enzyme composed of 10 subunits. The complex is composed of 3 respiratory subunits cytochrome b (MT-CYB), cytochrome c1 (CYC1-1 or CYC1-2) and Rieske protein (UCR1-1 or UCR1-2), 2 core protein subunits MPPalpha1 (or MPPalpha2) and MPPB, and 5 low-molecular weight protein subunits QCR7-1 (or QCR7-2), UCRQ-1 (or UCRQ-2), QCR9, UCRY and probably QCR6-1 (or QCR6-2). The complex exists as an obligatory dimer and forms supercomplexes (SCs) in the inner mitochondrial membrane with NADH-ubiquinone oxidoreductase (complex I, CI), resulting in different assemblies (supercomplexes SCI(1)III(2) and SCI(2)III(4)). Heme b is required as a cofactor.

Its subcellular location is the mitochondrion inner membrane. Its function is as follows. Component of the ubiquinol-cytochrome c oxidoreductase, a multisubunit transmembrane complex that is part of the mitochondrial electron transport chain which drives oxidative phosphorylation. The respiratory chain contains 3 multisubunit complexes succinate dehydrogenase (complex II, CII), ubiquinol-cytochrome c oxidoreductase (cytochrome b-c1 complex, complex III, CIII) and cytochrome c oxidase (complex IV, CIV), that cooperate to transfer electrons derived from NADH and succinate to molecular oxygen, creating an electrochemical gradient over the inner membrane that drives transmembrane transport and the ATP synthase. The cytochrome b-c1 complex catalyzes electron transfer from ubiquinol to cytochrome c, linking this redox reaction to translocation of protons across the mitochondrial inner membrane, with protons being carried across the membrane as hydrogens on the quinol. In the process called Q cycle, 2 protons are consumed from the matrix, 4 protons are released into the intermembrane space and 2 electrons are passed to cytochrome c. Cytochrome b is a catalytic core subunit containing 2 b-type hemes BL and BH topographically segregated in the quinone reduction (Qi) and quinol oxidation (Q0) sites on opposite sides of the membrane. This Arabidopsis thaliana (Mouse-ear cress) protein is Cytochrome b (MT-CYB).